Reading from the N-terminus, the 231-residue chain is Demethylmenaquinone methyltransferase (231 aa).

Residues Thr62, Asp80, 100-101, and Ser117 each bind S-adenosyl-L-methionine; that span reads DA.

Belongs to the class I-like SAM-binding methyltransferase superfamily. MenG/UbiE family.

The catalysed reaction is a 2-demethylmenaquinol + S-adenosyl-L-methionine = a menaquinol + S-adenosyl-L-homocysteine + H(+). It functions in the pathway quinol/quinone metabolism; menaquinone biosynthesis; menaquinol from 1,4-dihydroxy-2-naphthoate: step 2/2. Methyltransferase required for the conversion of demethylmenaquinol (DMKH2) to menaquinol (MKH2). This chain is Demethylmenaquinone methyltransferase, found in Mycobacterium marinum (strain ATCC BAA-535 / M).